Here is a 74-residue protein sequence, read N- to C-terminus: Cytoplasmic envelopment protein 3 (74 aa).

Residue Gly2 is the site of N-myristoyl glycine; by host attachment. The Di-leucine-like internalization motif motif lies at 15-16 (LV). Residues 34 to 40 (SMEEFDI) form an asp/Glu-rich (acidic) region. Residues 36–74 (EEFDIPPPPPLPKPVFKQPGPYKIPARSQRCPSKRRDPY) are disordered.

It belongs to the herpesviridae cytoplasmic envelopment protein 3 family. As to quaternary structure, interacts with cytoplasmic envelopment protein 2; this interaction is essential for the proper localization of each protein to the assembly complex and thus for the production of infectious virus. Post-translationally, myristoylation and palmitoylation (probably on one or more of the nearby cysteines at the N-terminus) enable membrane-binding and Golgi apparatus-specific targeting and are essential for efficient packaging. In terms of processing, phosphorylated. Phosphorylation does not seem to be required for recycling to the host Golgi apparatus. Packaging is selective for underphosphorylated forms.

It is found in the virion tegument. Its subcellular location is the virion membrane. The protein resides in the host cell membrane. It localises to the host Golgi apparatus membrane. Functionally, plays an important role in the cytoplasmic envelopment of tegument proteins and capsids during the assembly and egress processes. Also participates in viral entry at the fusion step probably by regulating the core fusion machinery. The chain is Cytoplasmic envelopment protein 3 from Equine herpesvirus 1 (strain Ab4p) (EHV-1).